Reading from the N-terminus, the 177-residue chain is Protein PrsK (177 aa).

A signal peptide spans 1 to 21 (MIKSTGALLLFAALSAGQAMA).

The protein localises to the fimbrium. This Escherichia coli protein is Protein PrsK (prsK).